The sequence spans 243 residues: NifU-like scaffold protein (243 aa).

Belongs to the NifU family. In terms of assembly, homodimer.

The protein localises to the plastid. Its subcellular location is the apicoplast. Its pathway is cofactor biosynthesis; iron-sulfur cluster biosynthesis. Its function is as follows. Binds and transfers [4Fe-4S] iron-sulfur clusters to target proteins. This chain is NifU-like scaffold protein, found in Plasmodium berghei (strain Anka).